A 137-amino-acid polypeptide reads, in one-letter code: Acidic phospholipase A2 CC-PLA2-1 (137 aa).

The N-terminal stretch at 1-16 (MRTLWIVAVWLMGVEG) is a signal peptide. Intrachain disulfides connect cysteine 42–cysteine 130, cysteine 44–cysteine 60, cysteine 59–cysteine 110, cysteine 65–cysteine 137, cysteine 66–cysteine 103, cysteine 73–cysteine 96, and cysteine 90–cysteine 101. 3 residues coordinate Ca(2+): tyrosine 43, glycine 45, and glycine 47. Residue histidine 63 is part of the active site. Position 64 (aspartate 64) interacts with Ca(2+). Residue aspartate 104 is part of the active site.

Belongs to the phospholipase A2 family. Group II subfamily. D49 sub-subfamily. Ca(2+) is required as a cofactor. Post-translationally, glycosylated (2.5%). In terms of tissue distribution, expressed by the venom gland.

The protein resides in the secreted. The catalysed reaction is a 1,2-diacyl-sn-glycero-3-phosphocholine + H2O = a 1-acyl-sn-glycero-3-phosphocholine + a fatty acid + H(+). In terms of biological role, snake venom phospholipase A2 (PLA2) that inhibits blood coagulation and platelet aggregation induced by ADP and arachidonic acid. Inhibits tumor cell adhesion and migration in a dose-dependent manner. Abolishes the attachment of human brain microvascular endothelial cells (HBMEC) to fibrinogen (IC(50)=0.12 uM) and dramatically reduces its adhesion to fibronectin (IC(50)=0.12 uM), whereas no effect is observed on type I collagen, vitronectin or laminin 1. Also blocks the cell migration toward fibronectin and fibrinogen. These effects are not dependent of the catalytic activity, but are mediated by alpha-5/beta-1 (ITGA5/ITGB1) and alpha-v-containing (ITGAV) integrins. Also shows anti-angiogenic activity in chicken chorioallantoix membrane assay. Has a relatively high enzymatic activity. PLA2 catalyzes the calcium-dependent hydrolysis of the 2-acyl groups in 3-sn-phosphoglycerides. In Cerastes cerastes (Horned desert viper), this protein is Acidic phospholipase A2 CC-PLA2-1.